A 250-amino-acid chain; its full sequence is Probable transcriptional regulatory protein RC1_1808 (250 aa).

Residues 1–21 (MAGHSQFKNIMHRKGAQDAKR) are disordered.

The protein belongs to the TACO1 family.

The protein localises to the cytoplasm. This Rhodospirillum centenum (strain ATCC 51521 / SW) protein is Probable transcriptional regulatory protein RC1_1808.